A 164-amino-acid polypeptide reads, in one-letter code: Lipoprotein signal peptidase (164 aa).

Transmembrane regions (helical) follow at residues 11 to 31 (YWVL…AVLS), 41 to 61 (VIPS…FSFL), 64 to 84 (QGGW…AYLV), and 92 to 112 (FATL…GNVI). Residues Asp122 and Asp140 contribute to the active site. A helical transmembrane segment spans residues 132-152 (FYPAFNIADSFICVGAVLAVL).

Belongs to the peptidase A8 family.

The protein resides in the cell inner membrane. The enzyme catalyses Release of signal peptides from bacterial membrane prolipoproteins. Hydrolyzes -Xaa-Yaa-Zaa-|-(S,diacylglyceryl)Cys-, in which Xaa is hydrophobic (preferably Leu), and Yaa (Ala or Ser) and Zaa (Gly or Ala) have small, neutral side chains.. Its pathway is protein modification; lipoprotein biosynthesis (signal peptide cleavage). Its function is as follows. This protein specifically catalyzes the removal of signal peptides from prolipoproteins. This chain is Lipoprotein signal peptidase, found in Neisseria meningitidis serogroup C (strain 053442).